The following is a 95-amino-acid chain: uncharacterized protein (95 aa).

This is an uncharacterized protein from Acidianus hospitalis (AFV-1).